We begin with the raw amino-acid sequence, 140 residues long: Putative pre-16S rRNA nuclease (140 aa).

It belongs to the YqgF nuclease family.

Its subcellular location is the cytoplasm. In terms of biological role, could be a nuclease involved in processing of the 5'-end of pre-16S rRNA. The protein is Putative pre-16S rRNA nuclease of Halalkalibacterium halodurans (strain ATCC BAA-125 / DSM 18197 / FERM 7344 / JCM 9153 / C-125) (Bacillus halodurans).